The primary structure comprises 266 residues: MRKNTYAMRYVAGQPAERILPPGSFASIGQALPAGEPLSSEERIRILVWNIFKQQRAEWLSVLKNYGKDAHLVLLQEAQTTPELVQFATANYLAADQVPAFVLPQHPSGVMTLSAAHPVYCCPLREREPILRLAKSALVTVYPLPDTRLLMVVNVHAVNFSLGVDVYSKQLLPIGDQIAHHSGPVIMAGDFNTWSRPRMNALYRFAREMSLRQVRFTDDQRRRAFGRPLDFVFYRGLNVNEASVLVTRASDHNPLLVEFSPGKPEQ.

This sequence belongs to the UPF0294 family.

The protein resides in the cytoplasm. The protein is UPF0294 protein YafD of Salmonella paratyphi C (strain RKS4594).